We begin with the raw amino-acid sequence, 100 residues long: Urease subunit gamma (100 aa).

Belongs to the urease gamma subunit family. As to quaternary structure, heterotrimer of UreA (gamma), UreB (beta) and UreC (alpha) subunits. Three heterotrimers associate to form the active enzyme.

Its subcellular location is the cytoplasm. The catalysed reaction is urea + 2 H2O + H(+) = hydrogencarbonate + 2 NH4(+). It participates in nitrogen metabolism; urea degradation; CO(2) and NH(3) from urea (urease route): step 1/1. This is Urease subunit gamma from Actinobacillus pleuropneumoniae (Haemophilus pleuropneumoniae).